We begin with the raw amino-acid sequence, 356 residues long: Peritrophin-44 (356 aa).

A signal peptide spans 1–23 (MKELQITTGCLLLMVAAIGKTSA). Chitin-binding type-2 domains are found at residues 28–85 (SETC…KCIS), 88–146 (KNAC…ECTA), 147–201 (DSIC…PCLA), 220–283 (NFVC…PCTF), and 286–355 (CGNL…YKLC). An intrachain disulfide couples Cys62 to Cys75. A glycan (N-linked (GlcNAc...) asparagine) is linked at Asn114. 3 disulfides stabilise this stretch: Cys122/Cys135, Cys181/Cys193, and Cys262/Cys273. Asn309 carries an N-linked (GlcNAc...) asparagine glycan.

Post-translationally, glycosylated. As to expression, larval peritrophic membrane.

In terms of biological role, may have roles in the maintenance of peritrophic membrane structure and in the determination of the porosity of the peritrophic membrane. May bind chitin or related oligosaccharide structures. The sequence is that of Peritrophin-44 from Lucilia cuprina (Green bottle fly).